Reading from the N-terminus, the 255-residue chain is Aliphatic sulfonates import ATP-binding protein SsuB (255 aa).

Residues 12-233 (LLLNAVSKHY…RLGSVRLAEL (222 aa)) enclose the ABC transporter domain. 44-51 (GRSGGGKS) lines the ATP pocket.

Belongs to the ABC transporter superfamily. Aliphatic sulfonates importer (TC 3.A.1.17.2) family. The complex is composed of two ATP-binding proteins (SsuB), two transmembrane proteins (SsuC) and a solute-binding protein (SsuA).

The protein localises to the cell inner membrane. It carries out the reaction ATP + H2O + aliphatic sulfonate-[sulfonate-binding protein]Side 1 = ADP + phosphate + aliphatic sulfonateSide 2 + [sulfonate-binding protein]Side 1.. In terms of biological role, part of the ABC transporter complex SsuABC involved in aliphatic sulfonates import. Responsible for energy coupling to the transport system. The sequence is that of Aliphatic sulfonates import ATP-binding protein SsuB from Escherichia coli O6:H1 (strain CFT073 / ATCC 700928 / UPEC).